Here is an 83-residue protein sequence, read N- to C-terminus: U3-theraphotoxin-Cg1a (83 aa).

The first 23 residues, 1 to 23 (MRTFTLIAILTCAVLVIFHAAAA), serve as a signal peptide directing secretion. Residues 24–44 (EELEAQDVIETEALATLDEER) constitute a propeptide that is removed on maturation. Cystine bridges form between Cys-48–Cys-61, Cys-52–Cys-75, and Cys-69–Cys-80.

It belongs to the neurotoxin 12 (Hwtx-2) family. 03 (juruin) subfamily. Contains 3 disulfide bonds. Two different connectivities are observed in similar proteins (C1-C3, C2-C5, C4-C6 or C1-C4, C2-C5, C3-C6). As to expression, expressed by the venom gland.

It is found in the secreted. Probable ion channel inhibitor. The polypeptide is U3-theraphotoxin-Cg1a (Chilobrachys guangxiensis (Chinese earth tiger tarantula)).